Here is a 190-residue protein sequence, read N- to C-terminus: Potassium-transporting ATPase KdpC subunit (190 aa).

The helical transmembrane segment at 10–30 threads the bilayer; the sequence is TFIFLLLITGGVYPLLTTVLG.

It belongs to the KdpC family. As to quaternary structure, the system is composed of three essential subunits: KdpA, KdpB and KdpC.

It is found in the cell inner membrane. Its function is as follows. Part of the high-affinity ATP-driven potassium transport (or Kdp) system, which catalyzes the hydrolysis of ATP coupled with the electrogenic transport of potassium into the cytoplasm. This subunit acts as a catalytic chaperone that increases the ATP-binding affinity of the ATP-hydrolyzing subunit KdpB by the formation of a transient KdpB/KdpC/ATP ternary complex. The protein is Potassium-transporting ATPase KdpC subunit of Shigella dysenteriae serotype 1 (strain Sd197).